Here is an 861-residue protein sequence, read N- to C-terminus: Leucine--tRNA ligase (861 aa).

Positions 42–52 (PYPSGNLHMGH) match the 'HIGH' region motif. The 'KMSKS' region motif lies at 620–624 (KMSKS). Lysine 623 lines the ATP pocket.

Belongs to the class-I aminoacyl-tRNA synthetase family.

The protein localises to the cytoplasm. The enzyme catalyses tRNA(Leu) + L-leucine + ATP = L-leucyl-tRNA(Leu) + AMP + diphosphate. The sequence is that of Leucine--tRNA ligase from Baumannia cicadellinicola subsp. Homalodisca coagulata.